A 552-amino-acid polypeptide reads, in one-letter code: Urocanate hydratase (552 aa).

Residues 49–50 (GG), Gln127, 173–175 (GMG), Asp193, 239–240 (NA), 260–264 (QTSAH), 270–271 (YI), and Tyr319 each bind NAD(+). Cys407 is a catalytic residue. Position 489 (Gly489) interacts with NAD(+).

Belongs to the urocanase family. NAD(+) is required as a cofactor.

The protein localises to the cytoplasm. It catalyses the reaction 4-imidazolone-5-propanoate = trans-urocanate + H2O. It participates in amino-acid degradation; L-histidine degradation into L-glutamate; N-formimidoyl-L-glutamate from L-histidine: step 2/3. Catalyzes the conversion of urocanate to 4-imidazolone-5-propionate. This chain is Urocanate hydratase, found in Bacillus cereus (strain ATCC 10987 / NRS 248).